The chain runs to 8081 residues: Muscle M-line assembly protein unc-89 (8081 aa).

The interval 24-57 is disordered; that stretch reads DVNYSTHSSRSSYRSESLTSRTDGRGRSTSSEII. Residues 28–54 are compositionally biased toward low complexity; it reads STHSSRSSYRSESLTSRTDGRGRSTSS. Residues 63–127 enclose the SH3 domain; the sequence is RSYPVYIAIQ…PGSYFETPTE (65 aa). Residues 152 to 330 form the DH domain; it reads KRDQVYHELL…TTIPQRVHDL (179 aa). One can recognise a PH domain in the interval 342–498; it reads DTGKLGRIIR…WSGSRKSSLF (157 aa). Residues 479-495 show a composition bias toward polar residues; the sequence is ASDQQSEFSEWSGSRKS. Residues 479-531 are disordered; it reads ASDQQSEFSEWSGSRKSSLFPGPEEGGPPRKKVKSPPVISPTGSSTSIYSGGS. A compositionally biased stretch (low complexity) spans 518–531; sequence SPTGSSTSIYSGGS. Ig-like C2-type domains lie at 547 to 633, 648 to 736, 748 to 838, 946 to 1033, 1044 to 1132, and 1140 to 1227; these read GTRV…ASTS, PAFV…AELF, PEFQ…LKVR, PTFL…ARLV, PKFV…AKLT, and PEFD…NTLG. An intrachain disulfide couples cysteine 568 to cysteine 621. Composition is skewed to low complexity over residues 1283–1303 and 1326–1335; these read STKTTTMSTTEVTSTVGGVTV and EGSISVSKIE. The disordered stretch occupies residues 1283–1892; sequence STKTTTMSTT…PAPKLTRDLK (610 aa). Basic and acidic residues-rich tracts occupy residues 1336–1351, 1361–1446, 1453–1490, 1515–1585, 1592–1832, and 1839–1857; these read VVSKTDSQTDVREGTP, ELPK…KEKS, KTGDEVKEKSPPKSPTKKEKSPEKPEDVKSPVKKEKSP, MTHE…KSPE, KKSE…KEKS, and KTGDESKEKSPEKPEEKPK. RCSD domains lie at 1375 to 1475, 1479 to 1585, 1597 to 1695, and 1700 to 1799; these read KSPS…KSPE, DVKS…KSPE, EVKS…KSPQ, and KPAS…KSPE. Residues 1858-1868 are compositionally biased toward pro residues; sequence SPTPKKSPPGS. Residues 1875–1892 show a composition bias toward basic and acidic residues; it reads KSPEAEKPPAPKLTRDLK. Ig-like C2-type domains follow at residues 1982–2067, 2071–2163, 2171–2261, 2269–2359, 2367–2455, 2463–2564, 2563–2651, 2657–2746, 2754–2858, 2887–2980, 2994–3081, 3087–3183, 3189–3280, 3286–3376, 3384–3469, 3482–3572, 3580–3667, 3686–3777, 3817–3908, 3920–4009, 4018–4106, 4109–4201, 4212–4297, 4302–4387, 4400–4485, 4489–4580, 4588–4678, 4681–4771, 4873–4961, 4965–5057, 5067–5160, 5171–5260, 5277–5366, 5383–5472, 5487–5578, 5595–5685, 5701–5790, 5815–5904, 5925–6014, 6038–6130, and 6150–6239; these read PEFT…AQLT, PSTT…ADLK, PKFK…AKVT, PEFV…AQLK, PKFT…VQLA, PTFA…AKPA, PAFQ…GPLK, PVEF…ATLL, PDFL…SEAQ, PKFI…ATLT, PEFI…AFLT, PVFT…SKIT, PVFE…AEVT, PTFV…ANFA, PEFV…EALT, PEFT…ANMA, PLFV…ETVG, PLFI…LKIQ, PEFV…IIVT, PDFL…VTLT, PGFF…VPLT, PSET…ATVT, PSFK…AKVN, PEIV…AALT, PGIA…CALT, PKII…GKIT, PKIT…AQLT, PNVL…GSVV, PTSG…CKVT, PKFV…CEFQ, PRFN…ATYQ, PKIN…CSVN, PFFT…AHVQ, PKFI…SFVR, PRFT…GTAT, PKLM…CDVN, PGFT…AELV, PRIR…GSLN, and PGFV…AVLD. The cysteines at positions 2582 and 2635 are disulfide-linked. Disulfide bonds link cysteine 2908/cysteine 2964 and cysteine 3015/cysteine 3065. Intrachain disulfides connect cysteine 3707–cysteine 3759 and cysteine 3838–cysteine 3890. The interval 4525–4553 is disordered; sequence KNGKEITPSDKAQPGSDGDNKPQLVIPDA. 4 disulfide bridges follow: cysteine 5298–cysteine 5350, cysteine 5404–cysteine 5456, cysteine 5508–cysteine 5560, and cysteine 5616–cysteine 5669. Intrachain disulfides connect cysteine 5836–cysteine 5888 and cysteine 5946–cysteine 5998. In terms of domain architecture, Fibronectin type-III 1 spans 6278 to 6374; it reads PDRGPFIKEV…SPPSRLMAPP (97 aa). 2 consecutive Ig-like C2-type domains span residues 6413–6502 and 6507–6596; these read PGVV…IMVD and PNFI…CTVT. One can recognise a Protein kinase 1 domain in the interval 6592–6878; sequence SCTVTVEAEG…VDEALDHPWI (287 aa). Disordered regions lie at residues 6954-7130, 7177-7217, 7284-7311, 7324-7343, and 7348-7372; these read KKPP…QQKI, QVEA…PQPQ, PAINLSPNPKSPRRSTPGTKSPVVLSPR, RGKPGFLPPGELAEDIDDED, and DRKKQVKPKDHDGENDFKDEKERLE. Residues 6999 to 7009 show a composition bias toward pro residues; sequence RQPPQIPPQPQ. Positions 7087 to 7110 are enriched in basic and acidic residues; it reads LEKRKLIPQDKGETPSHSKKEKTQ. Positions 7200 to 7215 are enriched in pro residues; the sequence is KPTPSPTSPQKSPVPQ. Residues 7284–7302 show a composition bias toward polar residues; it reads PAINLSPNPKSPRRSTPGT. The Ig-like C2-type 50 domain maps to 7528-7617; it reads PIFTARLRDV…TDKSSCRLIS (90 aa). The cysteines at positions 7549 and 7600 are disulfide-linked. The Fibronectin type-III 2 domain occupies 7623–7721; sequence RPGRPEAELS…SSRIVQTHGK (99 aa). The disordered stretch occupies residues 7746-7773; sequence STNQLGGISEESEEDSEARTANEDMKSN. Residues 7762–7771 are compositionally biased toward basic and acidic residues; it reads EARTANEDMK. A Protein kinase 2 domain is found at 7785–8035; the sequence is FQIGGLKFKG…TDEALSHKFL (251 aa).

This sequence belongs to the protein kinase superfamily. CAMK Ser/Thr protein kinase family. In terms of assembly, may interact (via fibronectin type-III domain 1, Ig-like C2-type domain 48/49 and protein kinase domain 1 or C-terminus of the interkinase region) with lim-9 (via LIM zinc-binding domain). May interact (via fibronectin type-III domain 1, Ig-like C2-type domain 48/49 and kinase protein domain 1 or Ig-like C2-type domain 50, fibronectin type-III domain 2 and kinase protein domain 2) with scpl-1 isoforms a and b (via FCP1 homology domain); the interaction may act as a molecular bridge to bring two unc-89 molecules together or to stabilize a loop between the 2 kinase domains. May interact (via SH3 domain) with unc-15. May interact (via Ig-like C2-type domain 1-3) with cpna-1 (via VWFA domain). May interact (via Ig-like C2-type domain 2/3 and, Ig-like C2-type domain 50 and fibronectin type-III domain 2) with mel-26 (via MATH domain). May interact (via DH and PH domains) with rho-1, ced-10, mig-2 and cdc-42. Expressed in body-wall, pharyngeal muscles and a few muscle cells of the tail (at protein level). Expressed in gonadal myoepithelial sheath cells (at protein level). Isoform c: Expressed in body wall and vulval muscles but not in pharyngeal muscles. Isoform d: Specifically expressed in vulval, intestinal, anal depressor and anal sphincter muscles.

It is found in the cytoplasm. It localises to the myofibril. Its subcellular location is the sarcomere. The protein resides in the m line. Structural component of the muscle M line which is involved in assembly and organization of sarcomere myofilaments. The large isoform a, isoform b, isoform d and isoform f play an essential role in maintaining the organization of sarcomeres but not myofilament alignment during body wall muscle development whereas the small isoform c and isoform d appear to have a minor role. Isoform b and isoform f are required for the organization of unc-15/paramyosin into sarcomere thick filaments in body wall muscles. By binding mel-26, a substrate adapter of the cul-3 E3 ubiquitin-protein ligase complex, regulates the organization of myosin thick filaments, likely by preventing the degradation of microtubule severing protein mei-1. Acts as a guanine nucleotide exchange factor (GEF) for Rho GTPase rho-1 but not ced-10, mig-2 and cdc-42. The large isoforms regulate Ca(2+) signaling during muscle contraction by ensuring the correct localization of sarco-endoplamic reticulum Ca(2+) ATPase sca-1 and ryanodine receptor unc-68. By controlling the contraction and/or organization of pharyngeal muscles, plays a role in the formation of pharyngeal gland cell extension. This is Muscle M-line assembly protein unc-89 (unc-89) from Caenorhabditis elegans.